The primary structure comprises 732 residues: Translation initiation factor IF-2 (732 aa).

The segment at 40-147 is disordered; that stretch reads PEVVEKLDHT…QQEQPMKKEK (108 aa). Basic and acidic residues predominate over residues 42–67; the sequence is VVEKLDHTYNKKNERPQASAPKEKQK. Positions 90 to 103 are enriched in basic residues; sequence KVPKKKSANKKKEG. A compositionally biased stretch (basic and acidic residues) spans 104-117; sequence KKHDLQLQQQEKKI. A compositionally biased stretch (basic residues) spans 118-129; that stretch reads FHQQKKKIKGKA. One can recognise a tr-type G domain in the interval 233–402; that stretch reads ERPPVVTIMG…LLVSEMEELK (170 aa). Positions 242 to 249 are G1; sequence GHVDHGKT. A GTP-binding site is contributed by 242 to 249; that stretch reads GHVDHGKT. Residues 267-271 form a G2 region; the sequence is GITQH. Residues 288–291 are G3; sequence DTPG. GTP contacts are provided by residues 288–292 and 342–345; these read DTPGH and NKMD. The interval 342 to 345 is G4; the sequence is NKMD. A G5 region spans residues 378-380; the sequence is SAK.

The protein belongs to the TRAFAC class translation factor GTPase superfamily. Classic translation factor GTPase family. IF-2 subfamily.

The protein localises to the cytoplasm. Its function is as follows. One of the essential components for the initiation of protein synthesis. Protects formylmethionyl-tRNA from spontaneous hydrolysis and promotes its binding to the 30S ribosomal subunits. Also involved in the hydrolysis of GTP during the formation of the 70S ribosomal complex. The sequence is that of Translation initiation factor IF-2 from Geobacillus sp. (strain WCH70).